A 238-amino-acid polypeptide reads, in one-letter code: Purine nucleoside phosphorylase DeoD-type (238 aa).

A purine D-ribonucleoside is bound at residue H5. Phosphate is bound by residues G21, R25, R44, and 88-91 (RIGS). A purine D-ribonucleoside contacts are provided by residues 180–182 (EME) and 204–205 (SD). D205 serves as the catalytic Proton donor.

It belongs to the PNP/UDP phosphorylase family. In terms of assembly, homohexamer; trimer of homodimers.

It catalyses the reaction a purine D-ribonucleoside + phosphate = a purine nucleobase + alpha-D-ribose 1-phosphate. The enzyme catalyses a purine 2'-deoxy-D-ribonucleoside + phosphate = a purine nucleobase + 2-deoxy-alpha-D-ribose 1-phosphate. Its function is as follows. Catalyzes the reversible phosphorolytic breakdown of the N-glycosidic bond in the beta-(deoxy)ribonucleoside molecules, with the formation of the corresponding free purine bases and pentose-1-phosphate. This Xenorhabdus nematophila (strain ATCC 19061 / DSM 3370 / CCUG 14189 / LMG 1036 / NCIMB 9965 / AN6) protein is Purine nucleoside phosphorylase DeoD-type.